A 190-amino-acid chain; its full sequence is COMM domain-containing protein 1 (190 aa).

An N-acetylalanine modification is found at alanine 2. The interval 2–123 (AAGELEGGKP…RWNSGLRGLS (122 aa)) is sufficient for interaction with SLC12A2. Cu cation-binding residues include histidine 101, methionine 110, and histidine 134. The COMM domain occupies 118–186 (GLRGLSWRVD…EVEESISTLI (69 aa)). The required for binding to PtdIns(4,5)P2 stretch occupies residues 125-190 (RVDGKSQSRH…SISTLISQPN (66 aa)).

Belongs to the COMM domain-containing protein 1 family. As to quaternary structure, component of the commander complex consisting of the CCC subcomplex and the retriever subcomplex. Component of the CCC (COMMD/CCDC22/CCDC93) subcomplex consisting of COMMD1, COMMD2, COMMD3, COMMD4, COMMD5, COMMD6, COMMD7, COMMD8, COMMD9, COMMD10, CCDC22 and CCDC93; within the complex forms a heterodimer with COMMD6. Interacts with VPS35L; the interaction associates the CCC complex with the retriever complex. Identified in a complex with an E3 ubiquitin ligase complex composed of TCEB1/elongin C, CUL2, SOCS1 and RBX1; in the complex interacts directly with SOCS1 and CUL2. Identified in a complex with NF-kappa-B. Interacts directly with SLC12A2. Interacts directly with ATP7B (via the N-terminal region). Interacts with ATP7A. Interacts with FAM107A; this interaction stabilizes COMMD1 in the nucleus. Interacts with CCS, CDKN2A, RELA, REL, RELB, NFKB1/p105, NFKB2/p100, NFKBIB, SCNN1D, SCNN1B, CFTR, CLU, SGK1, AKT1, CUL1, CUL2, CUL3, CUL4A, CUL4B, CUL5, CUL7, HIF1A. Post-translationally, acetylated by EP300 ina stimuli-specific manner; protecting it from XIAP-mediated proteasomal degradation and required for interaction with RElA in response to stress. In terms of processing, ubiquitinated; undergoes both 'Lys-63'- and 'Lys-48'-linked polyubiquitination. Ubiquitinated by XIAP, leading to its proteasomal degradation. As to expression, ubiquitous. Highest expression in the liver, with lower expression in brain, lung, placenta, pancreas, small intestine, heart, skeletal muscle, kidney and placenta. Down-regulated in cancer tissues.

The protein localises to the nucleus. The protein resides in the cytoplasm. Its subcellular location is the endosome membrane. It is found in the cytoplasmic vesicle. It localises to the early endosome. The protein localises to the recycling endosome. In terms of biological role, scaffold protein in the commander complex that is essential for endosomal recycling of transmembrane cargos; the commander complex is composed of the CCC subcomplex and the retriever subcomplex. Can modulate activity of cullin-RING E3 ubiquitin ligase (CRL) complexes by displacing CAND1; in vitro promotes CRL E3 activity and dissociates CAND1 from CUL1 and CUL2. Promotes ubiquitination of NF-kappa-B subunit RELA and its subsequent proteasomal degradation. Down-regulates NF-kappa-B activity. Involved in the regulation of membrane expression and ubiquitination of SLC12A2. Modulates Na(+) transport in epithelial cells by regulation of apical cell surface expression of amiloride-sensitive sodium channel (ENaC) subunits and by promoting their ubiquitination presumably involving NEDD4L. Promotes the localization of SCNN1D to recycling endosomes. Promotes CFTR cell surface expression through regulation of its ubiquitination. Down-regulates SOD1 activity by interfering with its homodimerization. Plays a role in copper ion homeostasis. Involved in copper-dependent ATP7A trafficking between the trans-Golgi network and vesicles in the cell periphery; the function is proposed to depend on its association within the CCC complex and cooperation with the WASH complex on early endosomes. Can bind one copper ion per monomer. May function to facilitate biliary copper excretion within hepatocytes. Binds to phosphatidylinositol 4,5-bisphosphate (PtdIns(4,5)P2). Involved in the regulation of HIF1A-mediated transcription; competes with ARNT/Hif-1-beta for binding to HIF1A resulting in decreased DNA binding and impaired transcriptional activation by HIF-1. Negatively regulates neuroblastoma G1/S phase cell cycle progression and cell proliferation by stimulating ubiquitination of NF-kappa-B subunit RELA and NF-kappa-B degradation in a FAM107A- and actin-dependent manner. The protein is COMM domain-containing protein 1 (COMMD1) of Homo sapiens (Human).